The chain runs to 356 residues: Guanine nucleotide-binding protein alpha-15 subunit (356 aa).

Gly-2 carries the N-myristoyl glycine lipid modification. A lipid anchor (S-palmitoyl cysteine) is attached at Cys-5. The G-alpha domain maps to 33–356 (GNQKLLLLGT…GRNLRGTGME (324 aa)). The interval 36–49 (KLLLLGTGECGKST) is G1 motif. GTP-binding positions include 41–48 (GTGECGKS), 177–183 (LRIRIPT), 202–206 (DVGGQ), 271–274 (NKRD), and Ala-328. Ser-48 and Thr-183 together coordinate Mg(2+). Residues 175-183 (DMLRIRIPT) form a G2 motif region. Positions 198–207 (FRIYDVGGQR) are G3 motif. The interval 267-274 (ILFLNKRD) is G4 motif. The G5 motif stretch occupies residues 326-331 (TCATDT).

The protein belongs to the G-alpha family. As to quaternary structure, g proteins are composed of 3 units; alpha, beta and gamma. The alpha chain contains the guanine nucleotide binding site.

Its function is as follows. Guanine nucleotide-binding proteins (G proteins) are involved as modulators or transducers in various transmembrane signaling systems. This chain is Guanine nucleotide-binding protein alpha-15 subunit (gpa-15), found in Caenorhabditis elegans.